Consider the following 205-residue polypeptide: Large ribosomal subunit protein uL18 (205 aa).

Belongs to the universal ribosomal protein uL18 family. In terms of assembly, part of the 50S ribosomal subunit. Contacts the 5S and 23S rRNAs.

Functionally, this is one of the proteins that bind and probably mediate the attachment of the 5S RNA into the large ribosomal subunit, where it forms part of the central protuberance. This chain is Large ribosomal subunit protein uL18, found in Pyrobaculum aerophilum (strain ATCC 51768 / DSM 7523 / JCM 9630 / CIP 104966 / NBRC 100827 / IM2).